We begin with the raw amino-acid sequence, 150 residues long: Large ribosomal subunit protein bL9 (150 aa).

It belongs to the bacterial ribosomal protein bL9 family.

Binds to the 23S rRNA. This is Large ribosomal subunit protein bL9 from Ralstonia pickettii (strain 12J).